Here is a 309-residue protein sequence, read N- to C-terminus: MKTIDLFAGCGGMSLGFMQAGFEIVAAVDNWRPAINTYQQNFTHPIHELDLAQIDAAVSLIKTHSPELIIGGPPCQDFSSAGKRDEGLGRANLTLDFAKIVLAIQPAWVIMENVERARLSKIHQQACSMLGDEGYSLAQVVLDASLCGVPQLRKRTFVIGHRHGSIADLANVLQQRLAKQSLTVRDYFGESLDTDYYYRHPRTYERRAIFSVNEPSPTIRGVNRPIPATYRMHPKDAGDVSLARPLTTKERSLIQTFPLDFKFVGTKSEQEQMIGNAVPVNLAFFLATSLQAYLNQPRMQQLSLLPSFF.

In terms of domain architecture, SAM-dependent MTase C5-type spans methionine 1–proline 297. Residue cysteine 75 is part of the active site.

It belongs to the class I-like SAM-binding methyltransferase superfamily. C5-methyltransferase family.

It carries out the reaction a 2'-deoxycytidine in DNA + S-adenosyl-L-methionine = a 5-methyl-2'-deoxycytidine in DNA + S-adenosyl-L-homocysteine + H(+). In terms of biological role, a methylase that recognizes the double-stranded sequence 5'-GRCGYC-3', methylates C-? on both strands, and protects the DNA from cleavage by the HgiDI endonuclease. In Herpetosiphon aurantiacus (Herpetosiphon giganteus), this protein is Type II methyltransferase M.HgiDI.